We begin with the raw amino-acid sequence, 319 residues long: Acetyl-coenzyme A carboxylase carboxyl transferase subunit beta (319 aa).

Residues 24-293 (LWIKCPDTGQ…MIEQEPEPSA (270 aa)) form the CoA carboxyltransferase N-terminal domain. Positions 282-319 (PEMIEQEPEPSAPVPPDEPDEPAATQEAPPAAPAAPPA) are disordered.

The protein belongs to the AccD/PCCB family. In terms of assembly, acetyl-CoA carboxylase is a heterohexamer composed of biotin carboxyl carrier protein (AccB), biotin carboxylase (AccC) and two subunits each of ACCase subunit alpha (AccA) and ACCase subunit beta (AccD).

Its subcellular location is the cytoplasm. It catalyses the reaction N(6)-carboxybiotinyl-L-lysyl-[protein] + acetyl-CoA = N(6)-biotinyl-L-lysyl-[protein] + malonyl-CoA. It functions in the pathway lipid metabolism; malonyl-CoA biosynthesis; malonyl-CoA from acetyl-CoA: step 1/1. Component of the acetyl coenzyme A carboxylase (ACC) complex. Biotin carboxylase (BC) catalyzes the carboxylation of biotin on its carrier protein (BCCP) and then the CO(2) group is transferred by the transcarboxylase to acetyl-CoA to form malonyl-CoA. The chain is Acetyl-coenzyme A carboxylase carboxyl transferase subunit beta from Nitrobacter winogradskyi (strain ATCC 25391 / DSM 10237 / CIP 104748 / NCIMB 11846 / Nb-255).